Consider the following 537-residue polypeptide: Periplasmic murein peptide-binding protein MppA (537 aa).

Residues 1 to 22 (MKHSVSVTCCALLVSSISLSYA) form the signal peptide. L-alanyl-gamma-D-glutamyl-meso-2,6-diaminopimelate-binding residues include Lys-42, Val-54, Leu-56, Gln-289, Arg-424, Ser-435, Val-437, Asp-439, and Thr-506.

Belongs to the bacterial solute-binding protein 5 family. As to quaternary structure, the complex is composed of two ATP-binding proteins (OppD and OppF), two transmembrane proteins (OppB and OppC) and a solute-binding protein (MppA).

The protein resides in the periplasm. In terms of biological role, part of the ABC transporter complex MppA-OppBCDF involved in the uptake of the cell wall murein tripeptide L-alanyl-gamma-D-glutamyl-meso-diaminopimelate. Is involved in the recycling of cell wall peptides. Binds the cell wall peptide L-Ala-D-Gly-gamma-meso-diaminopimelic acid. Can also transport ordinary alpha-linked tripeptides such as Pro-Phe-Lys, but with much lower efficiency than OppA. Cannot bind typical tripeptides such as Lys-Glu-Lys, Lys-Lys-Lys or Ala-Ala-Ala. The polypeptide is Periplasmic murein peptide-binding protein MppA (Escherichia coli (strain K12)).